Reading from the N-terminus, the 49-residue chain is L-amino-acid oxidase (49 aa).

Residue 43–44 (MS) coordinates FAD.

This sequence belongs to the flavin monoamine oxidase family. FIG1 subfamily. As to quaternary structure, homodimer; non-covalently linked. The cofactor is FAD. In terms of processing, N-glycosylated. In terms of tissue distribution, expressed by the venom gland.

The protein resides in the secreted. The enzyme catalyses an L-alpha-amino acid + O2 + H2O = a 2-oxocarboxylate + H2O2 + NH4(+). It carries out the reaction L-leucine + O2 + H2O = 4-methyl-2-oxopentanoate + H2O2 + NH4(+). Catalyzes an oxidative deamination of predominantly hydrophobic and aromatic L-amino acids, thus producing hydrogen peroxide that may contribute to the diverse toxic effects of this enzyme. Shows activity on L-Leu. Exhibits diverse biological activities, such as hemorrhage, hemolysis, edema, antibacterial and antiparasitic activities, as well as regulation of platelet aggregation. Its effect on platelets is controversial, since it either induces aggregation or inhibits agonist-induced aggregation. These different effects are probably due to different experimental conditions. In addition, this protein induces apoptosis and necrosis and has inhibitory effects on rat kidney function (decrease of blood flow and glomerular filtration). The polypeptide is L-amino-acid oxidase (Bothrops insularis (Golden lancehead)).